A 293-amino-acid polypeptide reads, in one-letter code: Glutamyl-Q tRNA(Asp) synthetase (293 aa).

Residues 8-12 (RFAPT) and E44 contribute to the L-glutamate site. The short motif at 11–21 (PTPSGYLHFGS) is the 'HIGH' region element. Residues C100, C102, Y114, and C118 each coordinate Zn(2+). Residues Y171 and R189 each contribute to the L-glutamate site. Residues 227-231 (KLGKS) carry the 'KMSKS' region motif. ATP is bound at residue K230.

This sequence belongs to the class-I aminoacyl-tRNA synthetase family. GluQ subfamily. Requires Zn(2+) as cofactor.

Functionally, catalyzes the tRNA-independent activation of glutamate in presence of ATP and the subsequent transfer of glutamate onto a tRNA(Asp). Glutamate is transferred on the 2-amino-5-(4,5-dihydroxy-2-cyclopenten-1-yl) moiety of the queuosine in the wobble position of the QUC anticodon. This is Glutamyl-Q tRNA(Asp) synthetase from Pseudomonas aeruginosa (strain ATCC 15692 / DSM 22644 / CIP 104116 / JCM 14847 / LMG 12228 / 1C / PRS 101 / PAO1).